A 167-amino-acid polypeptide reads, in one-letter code: SsrA-binding protein (167 aa).

A disordered region spans residues Gln-139–Ala-167. Positions Arg-144–Arg-158 are enriched in basic and acidic residues.

It belongs to the SmpB family.

It localises to the cytoplasm. In terms of biological role, required for rescue of stalled ribosomes mediated by trans-translation. Binds to transfer-messenger RNA (tmRNA), required for stable association of tmRNA with ribosomes. tmRNA and SmpB together mimic tRNA shape, replacing the anticodon stem-loop with SmpB. tmRNA is encoded by the ssrA gene; the 2 termini fold to resemble tRNA(Ala) and it encodes a 'tag peptide', a short internal open reading frame. During trans-translation Ala-aminoacylated tmRNA acts like a tRNA, entering the A-site of stalled ribosomes, displacing the stalled mRNA. The ribosome then switches to translate the ORF on the tmRNA; the nascent peptide is terminated with the 'tag peptide' encoded by the tmRNA and targeted for degradation. The ribosome is freed to recommence translation, which seems to be the essential function of trans-translation. This Xylella fastidiosa (strain M12) protein is SsrA-binding protein.